The chain runs to 274 residues: NH(3)-dependent NAD(+) synthetase (274 aa).

Position 46–53 (46–53 (GISGGQDS)) interacts with ATP. Asp-52 contacts Mg(2+). Position 140 (Arg-140) interacts with deamido-NAD(+). Thr-160 lines the ATP pocket. Position 165 (Glu-165) interacts with Mg(2+). Deamido-NAD(+) is bound by residues Lys-173 and Asp-180. Positions 189 and 211 each coordinate ATP. 260 to 261 (HK) serves as a coordination point for deamido-NAD(+).

The protein belongs to the NAD synthetase family. In terms of assembly, homodimer.

The enzyme catalyses deamido-NAD(+) + NH4(+) + ATP = AMP + diphosphate + NAD(+) + H(+). Its pathway is cofactor biosynthesis; NAD(+) biosynthesis; NAD(+) from deamido-NAD(+) (ammonia route): step 1/1. In terms of biological role, catalyzes the ATP-dependent amidation of deamido-NAD to form NAD. Uses ammonia as a nitrogen source. The polypeptide is NH(3)-dependent NAD(+) synthetase (Listeria innocua serovar 6a (strain ATCC BAA-680 / CLIP 11262)).